We begin with the raw amino-acid sequence, 194 residues long: PLLAARRLLGAELIGRGVTAAIVEVEAYGGPADGPWPDAASHSFRGAGGRNLVMFGPPGHLYTYRSHGIHVCANVVCGFDGVAGAVLLRAAVVRTGADVAGRRRGPAILPAALARGPGNLCSALGITMEDNGIDLFDADSPVRLTLGEPVPSVDGPRVGVSKAADRRWRLWLADSSEVSAYRRSPRAPAPGASD.

The protein belongs to the DNA glycosylase MPG family.

In Mycolicibacterium fortuitum (Mycobacterium fortuitum), this protein is Putative 3-methyladenine DNA glycosylase.